The primary structure comprises 103 residues: uncharacterized protein (103 aa).

Residues 35 to 57 traverse the membrane as a helical segment; that stretch reads PFVSMFQTFLEVLTATVLAFTAY.

Its subcellular location is the host membrane. This is an uncharacterized protein from Acidianus bottle-shaped virus (isolate Italy/Pozzuoli) (ABV).